Reading from the N-terminus, the 49-residue chain is Heme exporter protein C (49 aa).

This sequence belongs to the CcmC/CycZ/HelC family.

Its subcellular location is the cell inner membrane. Required for the export of heme to the periplasm for the biogenesis of c-type cytochromes. The polypeptide is Heme exporter protein C (Rhizobium leguminosarum bv. viciae).